Consider the following 1496-residue polypeptide: DENN domain-containing protein 4B (1496 aa).

Positions alanine 44–leucine 203 constitute an MABP domain. Residues valine 195–proline 369 enclose the uDENN domain. A cDENN domain is found at proline 390–threonine 526. In terms of domain architecture, dDENN spans leucine 528–alanine 644. The disordered stretch occupies residues glutamine 720–glutamine 744. Positions proline 729 to proline 739 are enriched in low complexity. PPR repeat units follow at residues tryptophan 775–proline 811 and aspartate 812–proline 846. 4 disordered regions span residues leucine 891 to alanine 970, valine 995 to arginine 1055, proline 1067 to tryptophan 1119, and serine 1205 to glycine 1227. A compositionally biased stretch (low complexity) spans glutamine 896 to glutamine 912. Polar residues-rich tracts occupy residues valine 913 to alanine 924 and arginine 935 to alanine 944. Serine 953 carries the post-translational modification Phosphoserine. Positions arginine 1075 to arginine 1090 are enriched in pro residues. A Phosphoserine modification is found at serine 1092. The segment covering glycine 1105–tryptophan 1119 has biased composition (low complexity).

The protein localises to the golgi apparatus. Guanine nucleotide exchange factor (GEF) which may activate RAB10. Promotes the exchange of GDP to GTP, converting inactive GDP-bound Rab proteins into their active GTP-bound form. This chain is DENN domain-containing protein 4B (DENND4B), found in Homo sapiens (Human).